A 344-amino-acid chain; its full sequence is L-rhamnose-proton symporter (344 aa).

10 helical membrane-spanning segments follow: residues 4-24 (AITM…CFYA), 38-58 (WSVG…AILL), 72-92 (TLLP…NYGL), 101-121 (MGIG…TPIL), 137-157 (TLLG…AGQL), 175-195 (LVLA…MNAA), 214-234 (LPSY…FCFI), 259-279 (VLLS…YAWG), 290-310 (MSWM…GLVL), and 321-341 (VGVL…VGLG).

Belongs to the L-rhamnose transporter (TC 2.A.7.6) family.

Its subcellular location is the cell inner membrane. It carries out the reaction L-rhamnopyranose(in) + H(+)(in) = L-rhamnopyranose(out) + H(+)(out). Its function is as follows. Uptake of L-rhamnose across the cytoplasmic membrane with the concomitant transport of protons into the cell (symport system). This chain is L-rhamnose-proton symporter, found in Enterobacter sp. (strain 638).